A 214-amino-acid chain; its full sequence is Large ribosomal subunit protein uL16-like (214 aa).

Belongs to the universal ribosomal protein uL16 family. In terms of assembly, component of a male germ cell-specific 60S large ribosomal subunit (LSU), which contains RPL10L and RPL39L, instead of RPL10 and RPL39 paralogs. The composition of the rest of the complex is similar to classical ribosomes. Testis-specific.

Its subcellular location is the cytoplasm. Testis-specific component of the ribosome, which is required for the transition from prophase to metaphase in male meiosis I. Compensates for the inactivated X-linked RPL10 paralog during spermatogenesis. The ribosome is a large ribonucleoprotein complex responsible for the synthesis of proteins in the cell. The male germ cell-specific ribosome displays a ribosomal polypeptide exit tunnel of distinct size and charge states compared with the classical ribosome. It is responsible for regulating the biosynthesis and folding of a subset of male germ-cell-specific proteins that are essential for the formation of sperm. The sequence is that of Large ribosomal subunit protein uL16-like from Mus musculus (Mouse).